The chain runs to 250 residues: PF03932 family protein CutC (250 aa).

This sequence belongs to the CutC family.

It localises to the cytoplasm. This Vibrio vulnificus (strain CMCP6) protein is PF03932 family protein CutC.